Here is a 443-residue protein sequence, read N- to C-terminus: Glutamine synthetase (443 aa).

A GS beta-grasp domain is found at Val11–Glu97. Residues Pro103 to Val443 enclose the GS catalytic domain. 2 residues coordinate Mg(2+): Glu126 and Glu128. Glu176 contacts ATP. Residues Glu181 and Glu188 each contribute to the Mg(2+) site. Gly233 contributes to the L-glutamate binding site. His237 is a binding site for Mg(2+). ATP-binding positions include His239 to Ser241 and Ser241. The L-glutamate site is built by Arg287, Glu293, and Arg305. 2 residues coordinate ATP: Arg305 and Arg310. Glu322 provides a ligand contact to Mg(2+). Residue Arg324 participates in L-glutamate binding.

This sequence belongs to the glutamine synthetase family. Oligomer of 12 subunits arranged in the form of two hexagons. Requires Mg(2+) as cofactor. The cofactor is Mn(2+).

Its subcellular location is the cytoplasm. The catalysed reaction is L-glutamate + NH4(+) + ATP = L-glutamine + ADP + phosphate + H(+). It catalyses the reaction hydroxylamine + L-glutamate + ATP = L-glutamine hydroxamate + ADP + phosphate. With respect to regulation, the activity of this enzyme is not controlled by adenylation. Its function is as follows. Carries out the ATP-dependent synthesis of glutamine from ammonium nitrogen and glutamate. Exhibits both L-gamma-glutamylhydroxamate synthetase and gamma-glutamyltransferase activities when using hydroxylamine as substrate; in fact, the enzyme possesses low biosynthetic activity, suggesting that the reaction is biased towards the degradation of glutamine under ammonia-rich conditions. Might play some role in ammonia assimilation under ammonia-starvation conditions. Can also use GTP instead of ATP in the synthetase reaction, but not CTP or UTP. The chain is Glutamine synthetase from Thermococcus kodakarensis (strain ATCC BAA-918 / JCM 12380 / KOD1) (Pyrococcus kodakaraensis (strain KOD1)).